The primary structure comprises 385 residues: Transcription termination factor 2, mitochondrial (385 aa).

The transit peptide at 1–35 directs the protein to the mitochondrion; the sequence is MPWRLPTGHQLCRLCLLRKPRPALKIKPSSACVTY.

Belongs to the mTERF family. Monomer.

It localises to the mitochondrion matrix. It is found in the mitochondrion nucleoid. Binds mitochondrial DNA and plays a role in the regulation of transcription of mitochondrial mRNA and rRNA species. This Mus musculus (Mouse) protein is Transcription termination factor 2, mitochondrial (Mterf2).